We begin with the raw amino-acid sequence, 331 residues long: MKKPVVIALAVAALAAVLAGGTWWYQSRQDNGLTLYGNVDIRTVNMSFRVGGRLASLAVDEGDAITSGQVLGVLDKAPYENALMQAKAGVSVAQAQYDLMLAGYRDEEIAQAAAAVKQAQAAFDYAQNFYQRQQGLWKSRTISANDLENARSSRDQAQAQLKSAQDKLSQYRTGNRQQDIAQAKASLEQAQAQLAQSELDLQDTTLIAPSDGTLLTRAVEPGSMLNAGSTVLTLSLTRPVWVRAYVDERNLSQAQPGREILLYTDGRPDKPYHGKIGFVSPTAEFTPKTVETPDLRTDLVYRLRIVVTDADDALRQGMPVTLTFSDEARHE.

The signal sequence occupies residues 1–15 (MKKPVVIALAVAALA). Residues 142–207 (ISANDLENAR…ELDLQDTTLI (66 aa)) are a coiled coil.

This sequence belongs to the UPF0194 family.

Its subcellular location is the periplasm. The protein is UPF0194 membrane protein CKO_02332 of Citrobacter koseri (strain ATCC BAA-895 / CDC 4225-83 / SGSC4696).